A 266-amino-acid polypeptide reads, in one-letter code: Translation initiation factor 2 subunit alpha (266 aa).

The region spanning 12–83 (GEILIATVKQ…RKGTVDVSLK (72 aa)) is the S1 motif domain.

Belongs to the eIF-2-alpha family. As to quaternary structure, heterotrimer composed of an alpha, a beta and a gamma chain.

EIF-2 functions in the early steps of protein synthesis by forming a ternary complex with GTP and initiator tRNA. The chain is Translation initiation factor 2 subunit alpha from Saccharolobus islandicus (strain L.S.2.15 / Lassen #1) (Sulfolobus islandicus).